Consider the following 436-residue polypeptide: Protein disulfide-isomerase (436 aa).

Positions 216–365 constitute a Thioredoxin domain; it reads FLAGKIDPSI…VEDATESAKA (150 aa). Catalysis depends on nucleophile residues Cys-266 and Cys-269. An intrachain disulfide couples Cys-266 to Cys-269. The interval 328–436 is disordered; the sequence is TLVPHCRGSR…ASASSVKDEL (109 aa). A compositionally biased stretch (basic residues) spans 334 to 343; sequence RGSRPVHRRE. Low complexity-rich tracts occupy residues 362–377 and 385–436; these read SAKA…AASA and VKSG…KDEL. The short motif at 433-436 is the Prevents secretion from ER element; the sequence is KDEL.

It belongs to the protein disulfide isomerase family.

The protein localises to the endoplasmic reticulum lumen. It carries out the reaction Catalyzes the rearrangement of -S-S- bonds in proteins.. Functionally, participates in the folding of proteins containing disulfide bonds, may be involved in glycosylation, prolyl hydroxylation and triglyceride transfer. The sequence is that of Protein disulfide-isomerase from Alternaria alternata (Alternaria rot fungus).